A 445-amino-acid chain; its full sequence is Glycine--tRNA ligase (445 aa).

Positions 97 and 145 each coordinate substrate. ATP-binding positions include 177–179 (RNE), 187–192 (FRTCEF), 262–263 (EI), and 308–311 (GLTR). 192-196 (FEQME) lines the substrate pocket. Position 304–308 (304–308 (ETSLG)) interacts with substrate.

It belongs to the class-II aminoacyl-tRNA synthetase family. Homodimer.

It localises to the cytoplasm. It catalyses the reaction tRNA(Gly) + glycine + ATP = glycyl-tRNA(Gly) + AMP + diphosphate. Catalyzes the attachment of glycine to tRNA(Gly). The chain is Glycine--tRNA ligase from Borrelia hermsii (strain HS1 / DAH).